A 336-amino-acid chain; its full sequence is Alcohol dehydrogenase, propanol-preferring (336 aa).

The Zn(2+) site is built by C37, H58, C89, C92, C95, C103, and C145.

Belongs to the zinc-containing alcohol dehydrogenase family. Requires Zn(2+) as cofactor.

The catalysed reaction is a primary alcohol + NAD(+) = an aldehyde + NADH + H(+). The enzyme catalyses a secondary alcohol + NAD(+) = a ketone + NADH + H(+). Functionally, preferred specificity is towards 1-propanol. This is Alcohol dehydrogenase, propanol-preferring (adhP) from Escherichia coli (strain K12).